The sequence spans 207 residues: dTTP/UTP pyrophosphatase (207 aa).

Asp87 (proton acceptor) is an active-site residue.

Belongs to the Maf family. YhdE subfamily. A divalent metal cation is required as a cofactor.

Its subcellular location is the cytoplasm. It catalyses the reaction dTTP + H2O = dTMP + diphosphate + H(+). It carries out the reaction UTP + H2O = UMP + diphosphate + H(+). In terms of biological role, nucleoside triphosphate pyrophosphatase that hydrolyzes dTTP and UTP. May have a dual role in cell division arrest and in preventing the incorporation of modified nucleotides into cellular nucleic acids. This Bordetella pertussis (strain Tohama I / ATCC BAA-589 / NCTC 13251) protein is dTTP/UTP pyrophosphatase.